Here is a 392-residue protein sequence, read N- to C-terminus: Phospho-N-acetylmuramoyl-pentapeptide-transferase (392 aa).

The next 10 helical transmembrane spans lie at 29–49, 76–96, 100–120, 137–157, 193–213, 225–245, 262–282, 289–309, 314–334, and 369–389; these read AVMA…FVIR, TMGG…WFDL, FVWI…ADDW, YLWQ…SISE, ISYP…IVGS, GLAI…AYVT, SGEL…FLWF, VFMG…IAVI, IVLA…MMQV, and QVVV…LSTL.

The protein belongs to the glycosyltransferase 4 family. MraY subfamily. The cofactor is Mg(2+).

It localises to the cell inner membrane. The catalysed reaction is UDP-N-acetyl-alpha-D-muramoyl-L-alanyl-gamma-D-glutamyl-meso-2,6-diaminopimeloyl-D-alanyl-D-alanine + di-trans,octa-cis-undecaprenyl phosphate = di-trans,octa-cis-undecaprenyl diphospho-N-acetyl-alpha-D-muramoyl-L-alanyl-D-glutamyl-meso-2,6-diaminopimeloyl-D-alanyl-D-alanine + UMP. The protein operates within cell wall biogenesis; peptidoglycan biosynthesis. In terms of biological role, catalyzes the initial step of the lipid cycle reactions in the biosynthesis of the cell wall peptidoglycan: transfers peptidoglycan precursor phospho-MurNAc-pentapeptide from UDP-MurNAc-pentapeptide onto the lipid carrier undecaprenyl phosphate, yielding undecaprenyl-pyrophosphoryl-MurNAc-pentapeptide, known as lipid I. In Polaromonas sp. (strain JS666 / ATCC BAA-500), this protein is Phospho-N-acetylmuramoyl-pentapeptide-transferase.